We begin with the raw amino-acid sequence, 166 residues long: Urease accessory protein UreE (166 aa).

The protein belongs to the UreE family.

It is found in the cytoplasm. Its function is as follows. Involved in urease metallocenter assembly. Binds nickel. Probably functions as a nickel donor during metallocenter assembly. This is Urease accessory protein UreE from Pseudomonas fluorescens (strain Pf0-1).